Reading from the N-terminus, the 265-residue chain is Cytochrome b-c1 complex subunit Rieske, mitochondrial (265 aa).

Residues 1-53 (MLRVAGRRLSSSAARSSSTFFTRSSFTVTDDSSPARSPSPSLTSSFLDQIRGF) constitute a mitochondrion transit peptide. The Mitochondrial matrix segment spans residues 54–102 (SSNSVSPAHQLGLVSDLPATVAAIKNPSSKIVYDDSNHERYPPGDPSKR). The helical transmembrane segment at 103–125 (AFAYFVLTGGRFVYASSVRLLIL) threads the bilayer. Over 126–265 (KFVLSMSASK…FLEENKLLIG (140 aa)) the chain is Mitochondrial intermembrane. The region spanning 175–263 (IKLANSVDLG…YSFLEENKLL (89 aa)) is the Rieske domain. 4 residues coordinate [2Fe-2S] cluster: cysteine 208, histidine 210, cysteine 227, and histidine 230. Cysteine 213 and cysteine 229 are oxidised to a cystine.

Belongs to the Rieske iron-sulfur protein family. In terms of assembly, component of the ubiquinol-cytochrome c oxidoreductase (cytochrome b-c1 complex, complex III, CIII), a multisubunit enzyme composed of 3 respiratory subunits cytochrome b, cytochrome c1 and Rieske protein, 2 core protein subunits, and several low-molecular weight protein subunits. The complex exists as an obligatory dimer and forms supercomplexes (SCs) in the inner mitochondrial membrane with cytochrome c oxidase (complex IV, CIV). [2Fe-2S] cluster serves as cofactor.

It localises to the mitochondrion inner membrane. The catalysed reaction is a quinol + 2 Fe(III)-[cytochrome c](out) = a quinone + 2 Fe(II)-[cytochrome c](out) + 2 H(+)(out). Component of the ubiquinol-cytochrome c oxidoreductase, a multisubunit transmembrane complex that is part of the mitochondrial electron transport chain which drives oxidative phosphorylation. The respiratory chain contains 3 multisubunit complexes succinate dehydrogenase (complex II, CII), ubiquinol-cytochrome c oxidoreductase (cytochrome b-c1 complex, complex III, CIII) and cytochrome c oxidase (complex IV, CIV), that cooperate to transfer electrons derived from NADH and succinate to molecular oxygen, creating an electrochemical gradient over the inner membrane that drives transmembrane transport and the ATP synthase. The cytochrome b-c1 complex catalyzes electron transfer from ubiquinol to cytochrome c, linking this redox reaction to translocation of protons across the mitochondrial inner membrane, with protons being carried across the membrane as hydrogens on the quinol. In the process called Q cycle, 2 protons are consumed from the matrix, 4 protons are released into the intermembrane space and 2 electrons are passed to cytochrome c. The Rieske protein is a catalytic core subunit containing a [2Fe-2S] iron-sulfur cluster. It cycles between 2 conformational states during catalysis to transfer electrons from the quinol bound in the Q(0) site in cytochrome b to cytochrome c1. This is Cytochrome b-c1 complex subunit Rieske, mitochondrial (FES1) from Solanum tuberosum (Potato).